The primary structure comprises 393 residues: N-lysine methyltransferase KMT5A (393 aa).

The segment at Pro68 to Val88 is disordered. Basic and acidic residues predominate over residues Met72–Gly85. Ser100 carries the post-translational modification Phosphoserine. Positions Arg134–Gly163 form a coiled coil. A disordered region spans residues Lys135–Ser241. Positions Met150 to Lys162 are enriched in basic and acidic residues. N6-acetyllysine is present on Lys162. Thr181 bears the Phosphothreonine mark. The span at Ala197 to Gln213 shows a compositional bias: basic residues. The 122-residue stretch at Glu257–Gly378 folds into the SET domain. Residues Lys267 to Arg269, Tyr312, and Asn339 to His340 each bind S-adenosyl-L-methionine.

This sequence belongs to the class V-like SAM-binding methyltransferase superfamily. Histone-lysine methyltransferase family. PR/SET subfamily. In terms of assembly, interacts with L3MBTL1. As to quaternary structure, interacts with SIRT2 (phosphorylated form); the interaction is direct, stimulates KMT5A-mediated methyltransferase activity at histone H4 'Lys-20' (H4K20me1) and is increased in a H(2)O(2)-induced oxidative stress-dependent manner. Acetylated at Lys-162; does not affect methyltransferase activity. Deacetylated at Lys-162 possibly by SIRT2; does not change methyltransferase activity. Post-translationally, ubiquitinated and degraded by the DCX(DTL) complex.

Its subcellular location is the nucleus. The protein localises to the chromosome. It carries out the reaction L-lysyl(20)-[histone H4] + S-adenosyl-L-methionine = N(6)-methyl-L-lysyl(20)-[histone H4] + S-adenosyl-L-homocysteine + H(+). The catalysed reaction is L-lysyl-[protein] + S-adenosyl-L-methionine = N(6)-methyl-L-lysyl-[protein] + S-adenosyl-L-homocysteine + H(+). In terms of biological role, protein-lysine N-methyltransferase that monomethylates both histones and non-histone proteins. Specifically monomethylates 'Lys-20' of histone H4 (H4K20me1). H4K20me1 is enriched during mitosis and represents a specific tag for epigenetic transcriptional repression. Mainly functions in euchromatin regions, thereby playing a central role in the silencing of euchromatic genes. Required for cell proliferation, probably by contributing to the maintenance of proper higher-order structure of DNA during mitosis. Involved in chromosome condensation and proper cytokinesis. Nucleosomes are preferred as substrate compared to free histones. Mediates monomethylation of p53/TP53 at 'Lys-382', leading to repress p53/TP53-target genes. Plays a negative role in TGF-beta response regulation and a positive role in cell migration. This Homo sapiens (Human) protein is N-lysine methyltransferase KMT5A.